A 319-amino-acid polypeptide reads, in one-letter code: MPPHAARPGPAQNRRGRAMAVITPRRERSSLLSRALRFTAAAATALVTAVSLAAPAHAANPYERGPNPTDALLEARSGPFSVSEERASRFGADGFGGGTIYYPRENNTYGAVAISPGYTGTQASVAWLGERIASHGFVVITIDTNTTLDQPDSRARQLNAALDYMINDASSAVRSRIDSSRLAVMGHSMGGGGTLRLASQRPDLKAAIPLTPWHLNKNWSSVRVPTLIIGADLDTIAPVLTHARPFYNSLPTSISKAYLELDGATHFAPNIPNKIIGKYSVAWLKRFVDNDTRYTQFLCPGPRDGLFGEVEEYRSTCPF.

Residues 1 to 58 form the signal peptide; that stretch reads MPPHAARPGPAQNRRGRAMAVITPRRERSSLLSRALRFTAAAATALVTAVSLAAPAHA. Residue Y118 participates in poly(ethylene terephthalate) binding. S188 serves as the catalytic Nucleophile. Residues M189 and W213 each coordinate poly(ethylene terephthalate). Catalysis depends on charge relay system residues D234 and H266. An intrachain disulfide couples C299 to C317.

Belongs to the AB hydrolase superfamily.

It is found in the secreted. The protein localises to the periplasm. The enzyme catalyses an acetyl ester + H2O = an aliphatic alcohol + acetate + H(+). It catalyses the reaction a butanoate ester + H2O = an aliphatic alcohol + butanoate + H(+). It carries out the reaction pentanoate ester + H2O = pentanoate + an aliphatic alcohol + H(+). The catalysed reaction is an octanoate ester + H2O = an aliphatic alcohol + octanoate + H(+). The enzyme catalyses decanoate ester + H2O = decanoate + an aliphatic alcohol + H(+). It catalyses the reaction a dodecanoate ester + H2O = an aliphatic alcohol + dodecanoate + H(+). It carries out the reaction a tetradecanoate ester + H2O = an aliphatic alcohol + tetradecanoate + H(+). The catalysed reaction is hexadecanoate ester + H2O = an aliphatic alcohol + hexadecanoate + H(+). The enzyme catalyses cutin + H2O = cutin monomers.. It catalyses the reaction (ethylene terephthalate)(n) + H2O = (ethylene terephthalate)(n-1) + 4-[(2-hydroxyethoxy)carbonyl]benzoate + H(+). Activated by magnesium ions. Activated by calcium ions. In terms of biological role, catalyzes the hydrolysis of cutin, a polyester that forms the structure of plant cuticle. Shows esterase activity towards p-nitrophenol-linked aliphatic esters (pNP-aliphatic esters). Capable of degrading the plastic poly(ethylene terephthalate) (PET), the most abundant polyester plastic in the world. The protein is Cutinase cut1 of Thermobifida fusca (Thermomonospora fusca).